Reading from the N-terminus, the 455-residue chain is uncharacterized protein (455 aa).

Transmembrane regions (helical) follow at residues 26–46, 53–73, 77–97, 111–131, 146–166, 191–211, 232–252, 256–276, 278–298, 323–343, and 357–377; these read FGPGVVALGIIAAVTLLQLLI, GAWGAIASMWLGVHLVPISIG, LGVMPLLPVLLMVWATARSTA, WVVASALGGPLLMAAIALAVI, ALRAFTSVLVVHSVGAATGVW, AAGVLALLGLSGVVTAGSLVV, LTVLSVLYAPNVIVGTSAIAV, AHIGFATFSSFAVLGGDIPAL, ILAAAPTPPLGPAWVALLIVG, LLVAAVAGALVMAVLGYGGGG, and ALVLGVLFWFTFVGWVTVVIA. Positions 384–455 are disordered; sequence PKRLRPAPPV…LSDEPPPRAD (72 aa).

It localises to the cell membrane. This is an uncharacterized protein from Mycobacterium tuberculosis (strain CDC 1551 / Oshkosh).